The chain runs to 377 residues: Adenosine 3'-phospho 5'-phosphosulfate transporter 2 (377 aa).

10 consecutive transmembrane segments (helical) span residues 50 to 70 (LCCG…ELIF), 77 to 97 (PYGW…GYIE), 115 to 135 (ALLA…VGYL), 138 to 158 (PTQV…SVLI), 164 to 184 (GPMD…FTLA), 195 to 215 (FGVF…NVQE), 228 to 248 (VVIY…LLSG), 266 to 286 (GYAF…LTLV), 293 to 313 (LAAT…FVFF), and 317 to 337 (FTIQ…LNVY).

The protein belongs to the nucleotide-sugar transporter family. SLC35B subfamily.

It is found in the golgi apparatus membrane. Functionally, mediates the transport of adenosine 3'-phospho 5'-phosphosulfate (PAPS), from cytosol into Golgi. PAPS is a universal sulfuryl donor for sulfation events that take place in the Golgi. Essential for viability. Involved in glycosaminoglycan synthesis and the subsequent signaling. May be involved in hh and dpp signaling by controlling the sulfation of heparan sulfate (HS). This is Adenosine 3'-phospho 5'-phosphosulfate transporter 2 from Anopheles gambiae (African malaria mosquito).